A 932-amino-acid polypeptide reads, in one-letter code: Protocadherin gamma-A6 (932 aa).

The first 29 residues, 1–29 (MAPPQRHPQRSEQVLLLTLLGTLWGAAAA), serve as a signal peptide directing secretion. 6 consecutive Cadherin domains span residues 30–133 (QIRY…TPRF), 134–242 (LKEE…TPMF), 243–347 (TQPV…VPEV), 348–452 (VVTS…PPTF), 453–562 (PHSS…APEI), and 570–682 (DGST…EPSA). The Extracellular segment spans residues 30–692 (QIRYSIPEEL…KPNDSDLTLY (663 aa)). Asn81 carries N-linked (GlcNAc...) asparagine glycosylation. 2 N-linked (GlcNAc...) asparagine glycosylation sites follow: Asn419 and Asn545. Asn685 is a glycosylation site (N-linked (GlcNAc...) asparagine). A helical transmembrane segment spans residues 693-713 (LVVAVAAVSCVFLAFVIVLLA). At 714 to 932 (LRLQRWHKSR…KKKSGKKEKK (219 aa)) the chain is on the cytoplasmic side. 2 disordered regions span residues 804–841 (PRQL…WPNN) and 902–932 (ATLT…KEKK). The span at 806 to 841 (QLQQAPPNTDWRFSQAQRPGTSGSQNGDDTGTWPNN) shows a compositional bias: polar residues. A compositionally biased stretch (basic residues) spans 922-932 (NKKKSGKKEKK).

The protein resides in the cell membrane. Functionally, potential calcium-dependent cell-adhesion protein. May be involved in the establishment and maintenance of specific neuronal connections in the brain. The chain is Protocadherin gamma-A6 (PCDHGA6) from Homo sapiens (Human).